We begin with the raw amino-acid sequence, 273 residues long: MRQDGRLPHEMRPVRITRHYNIHAEGSVLIEVGRTRVICTATLEDRVPPFLRGRGEGWITAEYGMLPRATGQRTAREAARGRQGGRTMEIQRLIGRALRSVIDLAALGERTLIIDCDVIQADGGTRTASITGAYVAMVDALAGLRAAGLIDRLPVKDYLAATSVGVVGGVPVLDLTYEEDSRAAVDLNLVMTGSGEVVEIQGTGEERPFTRRELEELLALAESGVRRLVALQREQLGPLGVEVGAVVTEASGIGHQEPGEGAGVSLAPGGGGL.

Residues Arg86 and 124–126 (GTR) contribute to the phosphate site. A disordered region spans residues 254-273 (GHQEPGEGAGVSLAPGGGGL).

It belongs to the RNase PH family. In terms of assembly, homohexameric ring arranged as a trimer of dimers.

The enzyme catalyses tRNA(n+1) + phosphate = tRNA(n) + a ribonucleoside 5'-diphosphate. In terms of biological role, phosphorolytic 3'-5' exoribonuclease that plays an important role in tRNA 3'-end maturation. Removes nucleotide residues following the 3'-CCA terminus of tRNAs; can also add nucleotides to the ends of RNA molecules by using nucleoside diphosphates as substrates, but this may not be physiologically important. Probably plays a role in initiation of 16S rRNA degradation (leading to ribosome degradation) during starvation. This Symbiobacterium thermophilum (strain DSM 24528 / JCM 14929 / IAM 14863 / T) protein is Ribonuclease PH.